Here is a 94-residue protein sequence, read N- to C-terminus: Mitochondrial import inner membrane translocase subunit Tim8 A (94 aa).

A Twin CX3C motif motif is present at residues 47–70 (CWDKCIDRPGNKLDSRTESCLVSC). Disulfide bonds link C47–C70 and C51–C66.

The protein belongs to the small Tim family. Heterohexamer; composed of 3 copies of TIMM8A and 3 copies of TIMM13, named soluble 70 kDa complex. Associates with the TIM22 complex, whose core is composed of TIMM22.

Its subcellular location is the mitochondrion inner membrane. Functionally, mitochondrial intermembrane chaperone that participates in the import and insertion of some multi-pass transmembrane proteins into the mitochondrial inner membrane. Also required for the transfer of beta-barrel precursors from the TOM complex to the sorting and assembly machinery (SAM complex) of the outer membrane. Acts as a chaperone-like protein that protects the hydrophobic precursors from aggregation and guide them through the mitochondrial intermembrane space. The TIMM8-TIMM13 complex mediates the import of some proteins while the predominant TIMM9-TIMM10 70 kDa complex mediates the import of much more proteins. The chain is Mitochondrial import inner membrane translocase subunit Tim8 A (timm8a) from Xenopus laevis (African clawed frog).